Consider the following 179-residue polypeptide: ATP synthase subunit delta (179 aa).

Belongs to the ATPase delta chain family. F-type ATPases have 2 components, F(1) - the catalytic core - and F(0) - the membrane proton channel. F(1) has five subunits: alpha(3), beta(3), gamma(1), delta(1), epsilon(1). F(0) has three main subunits: a(1), b(2) and c(10-14). The alpha and beta chains form an alternating ring which encloses part of the gamma chain. F(1) is attached to F(0) by a central stalk formed by the gamma and epsilon chains, while a peripheral stalk is formed by the delta and b chains.

The protein resides in the cell membrane. F(1)F(0) ATP synthase produces ATP from ADP in the presence of a proton or sodium gradient. F-type ATPases consist of two structural domains, F(1) containing the extramembraneous catalytic core and F(0) containing the membrane proton channel, linked together by a central stalk and a peripheral stalk. During catalysis, ATP synthesis in the catalytic domain of F(1) is coupled via a rotary mechanism of the central stalk subunits to proton translocation. In terms of biological role, this protein is part of the stalk that links CF(0) to CF(1). It either transmits conformational changes from CF(0) to CF(1) or is implicated in proton conduction. The chain is ATP synthase subunit delta from Clostridium perfringens (strain ATCC 13124 / DSM 756 / JCM 1290 / NCIMB 6125 / NCTC 8237 / Type A).